A 461-amino-acid chain; its full sequence is MRYLPLFVYLNNKPVLVVGGGIVAFRKVQILQKTGAIIQIVAKTLCLNLKTTLFKKKIIWIGKVFQISMLDNVFLVIIATDDTDFNDMVFKYAEKRHILVNTVDDPAKCSFIFPAIIDRSPILIGISSGGQAPVLIRMLKEKLESLIPMSIGYVASLAGIWRNKIKQHITDIVYRRFFWEKLFYNGQISLLVEKGNFRKANRVIKDAVLNQLHNRKQGSVSLVGAGPGDKGLLTIRGLQVIQTADIILYDYLVNPDILDLSRKDANKICVGKIAKKHSISQNNLNHFMIQLAQQGNNVVRLKGGDSFIFGRGGEELQAVSKAGIMFQVVPGITSGIGVAAYAGIPLTHREYAHSVVFMTGHKRHQGDYKINWSLLSDNKQTIVIYMGQLNAVNISKNLICHGRHIYTPVAIISRGTYLDQKILIGTLIELEKLIYMVKKPTLLIIGDVVSLHNEISWFGNG.

The tract at residues Met1–Ile204 is precorrin-2 dehydrogenase /sirohydrochlorin ferrochelatase. Residues Ile22 to Val23 and Lys43 to Thr44 each bind NAD(+). Ser128 is modified (phosphoserine). The tract at residues Gly218 to Gly461 is uroporphyrinogen-III C-methyltransferase. Residue Pro227 participates in S-adenosyl-L-methionine binding. Asp250 acts as the Proton acceptor in catalysis. Catalysis depends on Lys272, which acts as the Proton donor. Residues Gly303–Asp305, Ile308, Met386, and Gly415 contribute to the S-adenosyl-L-methionine site.

This sequence in the N-terminal section; belongs to the precorrin-2 dehydrogenase / sirohydrochlorin ferrochelatase family. The protein in the C-terminal section; belongs to the precorrin methyltransferase family.

The enzyme catalyses uroporphyrinogen III + 2 S-adenosyl-L-methionine = precorrin-2 + 2 S-adenosyl-L-homocysteine + H(+). It carries out the reaction precorrin-2 + NAD(+) = sirohydrochlorin + NADH + 2 H(+). It catalyses the reaction siroheme + 2 H(+) = sirohydrochlorin + Fe(2+). It functions in the pathway cofactor biosynthesis; adenosylcobalamin biosynthesis; precorrin-2 from uroporphyrinogen III: step 1/1. Its pathway is cofactor biosynthesis; adenosylcobalamin biosynthesis; sirohydrochlorin from precorrin-2: step 1/1. It participates in porphyrin-containing compound metabolism; siroheme biosynthesis; precorrin-2 from uroporphyrinogen III: step 1/1. The protein operates within porphyrin-containing compound metabolism; siroheme biosynthesis; siroheme from sirohydrochlorin: step 1/1. It functions in the pathway porphyrin-containing compound metabolism; siroheme biosynthesis; sirohydrochlorin from precorrin-2: step 1/1. Multifunctional enzyme that catalyzes the SAM-dependent methylations of uroporphyrinogen III at position C-2 and C-7 to form precorrin-2 via precorrin-1. Then it catalyzes the NAD-dependent ring dehydrogenation of precorrin-2 to yield sirohydrochlorin. Finally, it catalyzes the ferrochelation of sirohydrochlorin to yield siroheme. The chain is Siroheme synthase from Blochmanniella floridana.